A 1522-amino-acid chain; its full sequence is Dicer-like protein 1 (1522 aa).

Residues 1–12 (MTWAGDVEEQDD) are compositionally biased toward acidic residues. Positions 1–37 (MTWAGDVEEQDDYFSCSDVSTSGDRRKRAPQTVTQEE) are disordered. The Helicase ATP-binding domain occupies 76 to 258 (LFLRAKMQNT…EHVREAAREL (183 aa)). 89-96 (LDTGTGKT) serves as a coordination point for ATP. The short motif at 202–205 (DEAH) is the DEAH box element. A Helicase C-terminal domain is found at 408–576 (WLNLYYERTT…DVEQEKAELI (169 aa)). One can recognise a Dicer dsRNA-binding fold domain in the interval 600-700 (SLSILSHFVA…LPTISKYLPA (101 aa)). In terms of domain architecture, PAZ spans 859-980 (PFWKWSPQSR…ICPEPLHISN (122 aa)). RNase III domains follow at residues 995–1166 (IIHR…MQHH) and 1222–1373 (AHKI…VDSE). Mg(2+)-binding residues include Glu1262, Asp1359, and Glu1362. One can recognise a DRBM domain in the interval 1409-1478 (TRLSRLLSIN…SHAALEKLEG (70 aa)). Zn(2+)-binding residues include Cys1421, His1449, Cys1490, and Cys1492.

This sequence belongs to the helicase family. Dicer subfamily. Mg(2+) is required as a cofactor. Mn(2+) serves as cofactor.

Functionally, dicer-like endonuclease involved in cleaving double-stranded RNA in the RNA interference (RNAi) pathway. Produces 21 to 25 bp dsRNAs (siRNAs) which target the selective destruction of homologous RNAs leading to sequence-specific suppression of gene expression, called post-transcriptional gene silencing (PTGS). Part of a broad host defense response against viral infection and transposons. The protein is Dicer-like protein 1 (DCL1) of Phaeosphaeria nodorum (strain SN15 / ATCC MYA-4574 / FGSC 10173) (Glume blotch fungus).